We begin with the raw amino-acid sequence, 256 residues long: Small ribosomal subunit protein uS2 (256 aa).

The interval 229–256 (PVDDNGDYGDFDEAIDEYADETDASESE) is disordered. A compositionally biased stretch (acidic residues) spans 232–256 (DNGDYGDFDEAIDEYADETDASESE).

Belongs to the universal ribosomal protein uS2 family.

This is Small ribosomal subunit protein uS2 from Picosynechococcus sp. (strain ATCC 27264 / PCC 7002 / PR-6) (Agmenellum quadruplicatum).